The primary structure comprises 258 residues: MMNPLIIKLGGVLLDSEEALERLFSALVNYRESHQRPLVIVHGGGCVVDELMKGLNLPVKKKNGLRVTPADQIDIITGALAGTANKTLLAWAKKHQIAAVGLFLGDGDSVKVTQLDEELGHVGLAQPGSPKLINSLLENGYLPVVSSIGVTDEGQLMNVNADQAATALAATLGADLILLSDVSGILDGKGQRIAEMTAAKAEQLIEQGIITDGMIVKVNAALDAARTLGRPVDIASWRHAEQLPALFNGMPMGTRILA.

Substrate contacts are provided by residues 44 to 45 (GG), arginine 66, and asparagine 158. Residues 181-186 (DVSGIL) and 209-211 (IIT) contribute to the ATP site.

Belongs to the acetylglutamate kinase family. ArgB subfamily. In terms of assembly, homodimer.

Its subcellular location is the cytoplasm. It carries out the reaction N-acetyl-L-glutamate + ATP = N-acetyl-L-glutamyl 5-phosphate + ADP. It functions in the pathway amino-acid biosynthesis; L-arginine biosynthesis; N(2)-acetyl-L-ornithine from L-glutamate: step 2/4. Its function is as follows. Catalyzes the ATP-dependent phosphorylation of N-acetyl-L-glutamate. The polypeptide is Acetylglutamate kinase (Escherichia coli O157:H7).